The following is a 159-amino-acid chain: uncharacterized protein (159 aa).

Residues 7–151 (LLINYKTLEE…NPLVWHPASE (145 aa)) enclose the N-acetyltransferase domain.

This is an uncharacterized protein from Bacillus licheniformis (strain ATCC 14580 / DSM 13 / JCM 2505 / CCUG 7422 / NBRC 12200 / NCIMB 9375 / NCTC 10341 / NRRL NRS-1264 / Gibson 46).